Here is a 337-residue protein sequence, read N- to C-terminus: Glyceraldehyde-3-phosphate dehydrogenase (337 aa).

NAD(+) is bound by residues 12–13 (RI), aspartate 34, and arginine 79. D-glyceraldehyde 3-phosphate-binding positions include 150–152 (SCT), threonine 181, 210–211 (TG), and arginine 233. Cysteine 151 (nucleophile) is an active-site residue. An NAD(+)-binding site is contributed by asparagine 315.

It belongs to the glyceraldehyde-3-phosphate dehydrogenase family. Homotetramer.

It localises to the cytoplasm. The catalysed reaction is D-glyceraldehyde 3-phosphate + phosphate + NAD(+) = (2R)-3-phospho-glyceroyl phosphate + NADH + H(+). Its pathway is carbohydrate degradation; glycolysis; pyruvate from D-glyceraldehyde 3-phosphate: step 1/5. The protein is Glyceraldehyde-3-phosphate dehydrogenase (GPD) of Coccidioides posadasii (strain C735) (Valley fever fungus).